Here is a 703-residue protein sequence, read N- to C-terminus: Polyribonucleotide nucleotidyltransferase (703 aa).

Mg(2+)-binding residues include aspartate 486 and aspartate 492. Positions 553 to 614 (PRITTIWIKP…AACDAAIQMI (62 aa)) constitute a KH domain. Positions 624-692 (GKLYMGTVKK…KQGKIKLSRK (69 aa)) constitute an S1 motif domain.

It belongs to the polyribonucleotide nucleotidyltransferase family. Mg(2+) serves as cofactor.

It is found in the cytoplasm. The enzyme catalyses RNA(n+1) + phosphate = RNA(n) + a ribonucleoside 5'-diphosphate. Its function is as follows. Involved in mRNA degradation. Catalyzes the phosphorolysis of single-stranded polyribonucleotides processively in the 3'- to 5'-direction. This Trichlorobacter lovleyi (strain ATCC BAA-1151 / DSM 17278 / SZ) (Geobacter lovleyi) protein is Polyribonucleotide nucleotidyltransferase.